The sequence spans 762 residues: Mitochondrial intermediate peptidase (762 aa).

The transit peptide at 1–28 (MQVRTLLTLGKKKVIGNRQCILSLYRKY) directs the protein to the mitochondrion. A Zn(2+)-binding site is contributed by His-544. The active site involves Glu-545. Positions 548 and 551 each coordinate Zn(2+).

This sequence belongs to the peptidase M3 family. The cofactor is Zn(2+).

The protein resides in the mitochondrion matrix. The enzyme catalyses Release of an N-terminal octapeptide as second stage of processing of some proteins imported into the mitochondrion.. Its function is as follows. Cleaves proteins, imported into the mitochondrion, to their mature size. While most mitochondrial precursor proteins are processed to the mature form in one step by mitochondrial processing peptidase (MPP), the sequential cleavage by MIP of an octapeptide after initial processing by MPP is a required step for a subgroup of nuclear-encoded precursor proteins destined for the matrix or the inner membrane. The protein is Mitochondrial intermediate peptidase (oct1) of Schizosaccharomyces pombe (strain 972 / ATCC 24843) (Fission yeast).